The sequence spans 97 residues: Co-chaperonin GroES (97 aa).

Belongs to the GroES chaperonin family. In terms of assembly, heptamer of 7 subunits arranged in a ring. Interacts with the chaperonin GroEL.

The protein localises to the cytoplasm. Functionally, together with the chaperonin GroEL, plays an essential role in assisting protein folding. The GroEL-GroES system forms a nano-cage that allows encapsulation of the non-native substrate proteins and provides a physical environment optimized to promote and accelerate protein folding. GroES binds to the apical surface of the GroEL ring, thereby capping the opening of the GroEL channel. This chain is Co-chaperonin GroES, found in Klebsiella aerogenes (Enterobacter aerogenes).